Here is a 351-residue protein sequence, read N- to C-terminus: Biotin synthase (351 aa).

Positions 49 to 265 (NRVRIHILDN…LSVFRLVNPD (217 aa)) constitute a Radical SAM core domain. Cys-64, Cys-68, and Cys-71 together coordinate [4Fe-4S] cluster. Positions 108, 140, 200, and 269 each coordinate [2Fe-2S] cluster.

It belongs to the radical SAM superfamily. Biotin synthase family. In terms of assembly, homodimer. The cofactor is [4Fe-4S] cluster. It depends on [2Fe-2S] cluster as a cofactor.

The catalysed reaction is (4R,5S)-dethiobiotin + (sulfur carrier)-SH + 2 reduced [2Fe-2S]-[ferredoxin] + 2 S-adenosyl-L-methionine = (sulfur carrier)-H + biotin + 2 5'-deoxyadenosine + 2 L-methionine + 2 oxidized [2Fe-2S]-[ferredoxin]. The protein operates within cofactor biosynthesis; biotin biosynthesis; biotin from 7,8-diaminononanoate: step 2/2. Functionally, catalyzes the conversion of dethiobiotin (DTB) to biotin by the insertion of a sulfur atom into dethiobiotin via a radical-based mechanism. In Leptospira biflexa serovar Patoc (strain Patoc 1 / Ames), this protein is Biotin synthase.